The sequence spans 270 residues: Homeobox protein vent1B (270 aa).

Basic and acidic residues-rich tracts occupy residues 17-26 and 44-59; these read EEAADGKDSM and YAKE…DVQE. Disordered regions lie at residues 17 to 66 and 88 to 134; these read EEAA…SFQC and TWGS…LRTA. A compositionally biased stretch (polar residues) spans 89–99; that stretch reads WGSSDEFSSAG. Residues 116-131 are compositionally biased toward basic and acidic residues; that stretch reads QDTDHNGKSTKSDRRL. The homeobox DNA-binding region spans 128–187; sequence DRRLRTAFSPQQISKLEQAFNKQRYLGASERKKLATSLMLSEIQVKTWFQNRRMKLKRQI.

As to expression, expressed in the ventral marginal zone of gastrulae. At the end of gastrulation, predominantly localized to the ventral region of the closing slit blastopore. At early tail bud stage, expression is maintained only in the forming proctodeum.

It is found in the nucleus. Functionally, probable transcription regulator. Acts in a ventral signaling pathway downstream of bmp4 and vent2B. The protein is Homeobox protein vent1B (vent1B) of Xenopus laevis (African clawed frog).